The chain runs to 373 residues: Lipoyl synthase, mitochondrial (373 aa).

The N-terminal 26 residues, 1–26 (MALRCWDAARSLGSRIFGRYACSVRA), are a transit peptide targeting the mitochondrion. [4Fe-4S] cluster-binding residues include cysteine 105, cysteine 110, cysteine 116, cysteine 136, cysteine 140, cysteine 143, and serine 351. The 220-residue stretch at 121 to 340 (EYATATATIM…EEVGNELGFH (220 aa)) folds into the Radical SAM core domain.

Belongs to the radical SAM superfamily. Lipoyl synthase family. Requires [4Fe-4S] cluster as cofactor.

The protein resides in the mitochondrion. It catalyses the reaction [[Fe-S] cluster scaffold protein carrying a second [4Fe-4S](2+) cluster] + N(6)-octanoyl-L-lysyl-[protein] + 2 oxidized [2Fe-2S]-[ferredoxin] + 2 S-adenosyl-L-methionine + 4 H(+) = [[Fe-S] cluster scaffold protein] + N(6)-[(R)-dihydrolipoyl]-L-lysyl-[protein] + 4 Fe(3+) + 2 hydrogen sulfide + 2 5'-deoxyadenosine + 2 L-methionine + 2 reduced [2Fe-2S]-[ferredoxin]. It participates in protein modification; protein lipoylation via endogenous pathway; protein N(6)-(lipoyl)lysine from octanoyl-[acyl-carrier-protein]: step 2/2. Functionally, catalyzes the radical-mediated insertion of two sulfur atoms into the C-6 and C-8 positions of the octanoyl moiety bound to the lipoyl domains of lipoate-dependent enzymes, thereby converting the octanoylated domains into lipoylated derivatives. The sequence is that of Lipoyl synthase, mitochondrial (Lias) from Rattus norvegicus (Rat).